The following is a 426-amino-acid chain: Histidine--tRNA ligase (426 aa).

It belongs to the class-II aminoacyl-tRNA synthetase family. Homodimer.

It is found in the cytoplasm. The enzyme catalyses tRNA(His) + L-histidine + ATP = L-histidyl-tRNA(His) + AMP + diphosphate + H(+). This Pseudoalteromonas translucida (strain TAC 125) protein is Histidine--tRNA ligase.